Consider the following 249-residue polypeptide: 5'-nucleotidase SurE (249 aa).

4 residues coordinate a divalent metal cation: Asp8, Asp9, Ser39, and Asn91.

The protein belongs to the SurE nucleotidase family. A divalent metal cation serves as cofactor.

The protein localises to the cytoplasm. The enzyme catalyses a ribonucleoside 5'-phosphate + H2O = a ribonucleoside + phosphate. Functionally, nucleotidase that shows phosphatase activity on nucleoside 5'-monophosphates. The polypeptide is 5'-nucleotidase SurE (Azotobacter vinelandii (strain DJ / ATCC BAA-1303)).